Consider the following 347-residue polypeptide: NADH-ubiquinone oxidoreductase chain 2 (347 aa).

Transmembrane regions (helical) follow at residues 1 to 21 (MTPMTTLIMLFSLLLGTTLTL), 26 to 46 (WLLMWMGLEVSTLAIIPLLTY), 56 to 76 (AIKYFLTQATASMLLMFAASL), 96 to 116 (GIMTFALAMKLGLAPFHYWVP), 153 to 171 (ILLTLAISSTLLGGWNGLN), 178 to 198 (VMAYSSIAHMGWMVLIIIYFP), 199 to 219 (TLTTLNLTLYIMSTVALFTVF), 237 to 257 (APIMTLAIILLLLSLGGLPPL), 277 to 297 (IMATVLAITALLNLFFYMRII), and 326 to 346 (LPTLVILSTTLLPLTPMFITL).

Belongs to the complex I subunit 2 family. As to quaternary structure, core subunit of respiratory chain NADH dehydrogenase (Complex I) which is composed of 45 different subunits. Interacts with TMEM242.

The protein localises to the mitochondrion inner membrane. It carries out the reaction a ubiquinone + NADH + 5 H(+)(in) = a ubiquinol + NAD(+) + 4 H(+)(out). In terms of biological role, core subunit of the mitochondrial membrane respiratory chain NADH dehydrogenase (Complex I) which catalyzes electron transfer from NADH through the respiratory chain, using ubiquinone as an electron acceptor. Essential for the catalytic activity and assembly of complex I. This Ornithorhynchus anatinus (Duckbill platypus) protein is NADH-ubiquinone oxidoreductase chain 2.